A 473-amino-acid polypeptide reads, in one-letter code: Adenosylhomocysteinase (473 aa).

Residues threonine 60, aspartate 135, and glutamate 197 each contribute to the substrate site. 198 to 200 (TTT) serves as a coordination point for NAD(+). Residues lysine 227 and aspartate 231 each contribute to the substrate site. Residues asparagine 232, 261-266 (GFGDVG), glutamate 284, asparagine 319, 340-342 (IGH), and asparagine 385 each bind NAD(+).

This sequence belongs to the adenosylhomocysteinase family. It depends on NAD(+) as a cofactor.

The protein resides in the cytoplasm. It carries out the reaction S-adenosyl-L-homocysteine + H2O = L-homocysteine + adenosine. It participates in amino-acid biosynthesis; L-homocysteine biosynthesis; L-homocysteine from S-adenosyl-L-homocysteine: step 1/1. In terms of biological role, may play a key role in the regulation of the intracellular concentration of adenosylhomocysteine. The sequence is that of Adenosylhomocysteinase from Bradyrhizobium diazoefficiens (strain JCM 10833 / BCRC 13528 / IAM 13628 / NBRC 14792 / USDA 110).